A 662-amino-acid polypeptide reads, in one-letter code: Polyunsaturated fatty acid lipoxygenase ALOX15 (662 aa).

The PLAT domain occupies 2–114; that stretch reads GLYRIRVSTG…VLSLPEGTGR (113 aa). One can recognise a Lipoxygenase domain in the interval 115-662; the sequence is TVGEDPQGLF…PSVVENSVAI (548 aa). Positions 360, 365, 540, 544, and 662 each coordinate Fe cation.

This sequence belongs to the lipoxygenase family. As to quaternary structure, interacts with PEBP1; in response to IL13/interleukin-13, prevents the interaction of PEBP1 with RAF1 to activate the ERK signaling cascade. It depends on Fe cation as a cofactor. Detected in monocytes and eosinophils (at protein level). Expressed in airway epithelial cells.

The protein localises to the cytoplasm. It is found in the cytosol. It localises to the cell membrane. Its subcellular location is the lipid droplet. It carries out the reaction (5Z,8Z,11Z,14Z)-eicosatetraenoate + O2 = (12S)-hydroperoxy-(5Z,8Z,10E,14Z)-eicosatetraenoate. It catalyses the reaction (5Z,8Z,11Z,14Z)-eicosatetraenoate + O2 = (15S)-hydroperoxy-(5Z,8Z,11Z,13E)-eicosatetraenoate. The catalysed reaction is (9Z,12Z)-octadecadienoate + O2 = (13S)-hydroperoxy-(9Z,11E)-octadecadienoate. The enzyme catalyses (5Z,8Z,11Z,14Z)-eicosatetraenoate + 2 O2 = (14R,15S)-dihydroperoxy-(5Z,8Z,10E,12E)-eicosatetraenoate. It carries out the reaction (5Z,8Z,11Z,14Z)-eicosatetraenoate + 2 O2 = (8S,15S)-dihydroperoxy-(5Z,9E,11Z,13E)-eicosatetraenoate. It catalyses the reaction (14S,15R)-epoxy-(5Z,8Z,11Z)-eicosatrienoate + O2 = (8S)-hydroperoxy-(14S,15R)-epoxy-(5Z,9E,11Z)-eicosatrienoate. The catalysed reaction is (14S,15R)-epoxy-(5Z,8Z,11Z)-eicosatrienoate + O2 = (12S)-hydroperoxy-(14S,15R)-epoxy-(5Z,8Z,10E)-eicosatrienoate. The enzyme catalyses (14R,15S)-epoxy-(5Z,8Z,11Z)-eicosatrienoate + O2 = (5S)-hydroperoxy-(14R,15S)-epoxy-(6E,8Z,11Z)-eicosatrienoate. It carries out the reaction (14R,15S)-epoxy-(5Z,8Z,11Z)-eicosatrienoate + O2 = (12S)-hydroperoxy-(14R,15S)-epoxy-(5Z,8Z,10E)-eicosatrienoate. It catalyses the reaction (15R)-hydroperoxy-(5Z,8Z,11Z,13E)-eicosatetraenoate = 15-oxo-(5Z,8Z,11Z,13E)-eicosatetraenoate + H2O. The catalysed reaction is (15S)-hydroperoxy-(5Z,8Z,11Z,13E)-eicosatetraenoate = (14S,15S)-epoxy-(5Z,8Z,10E,12E)-eicosatetraenoate + H2O. The enzyme catalyses (12S)-hydroperoxy-(5Z,8Z,10E,14Z)-eicosatetraenoate = (8S)-hydroxy-(11S,12S)-epoxy-(5Z,9E,14Z)-eicosatrienoate. It carries out the reaction (4Z,7Z,10Z,13Z,16Z,19Z)-docosahexaenoate + O2 = (14S)-hydroperoxy-(4Z,7Z,10Z,12E,16Z,19Z)-docosahexaenoate. It catalyses the reaction (4Z,7Z,10Z,13Z,16Z,19Z)-docosahexaenoate + O2 = (17S)-hydroperoxy-(4Z,7Z,10Z,13Z,15E,19Z)-docosahexaenoate. The catalysed reaction is (7S)-hydroperoxy-(4Z,8E,10Z,13Z,16Z,19Z)-docosahexaenoate + O2 = (7S,14S)-dihydroperoxy-(4Z,8E,10Z,12E,16Z,19Z)-docosahexaenoate. The enzyme catalyses (7S)-hydroperoxy-(4Z,8E,10Z,13Z,16Z,19Z)-docosahexaenoate + O2 = (7S,17S)-dihydroperoxy-(4Z,8E,10Z,13Z,15E,19Z)-docosahexaenoate. It carries out the reaction (4Z,7Z,10Z,13Z,16Z,19Z)-docosahexaenoate + O2 = (11S)-hydroperoxy-(4Z,7Z,9E,13Z,16Z,19Z)-docosahexaenoate. It catalyses the reaction (7Z,10Z,13Z,16Z,19Z)-docosapentaenoate + O2 = 14-hydroperoxy-(7Z,10Z,12E,16Z,19Z)-docosapentaenoate. The catalysed reaction is (4Z,7Z,10Z,13Z,16Z)-docosapentaenoate + O2 = 14-hydroperoxy-(4Z,7Z,10Z,12E,16Z)-docosapentaenoate. The enzyme catalyses N-(5Z,8Z,11Z,14Z)-eicosatetraenoyl-taurine + O2 = N-(12S)-hydroperoxy-(5Z,8Z,10E,14Z)-eicosatetraenoyl-taurine. It carries out the reaction N-(5Z,8Z,11Z,14Z)-eicosatetraenoyl-gamma-aminobutanoate + O2 = N-(12S)-hydroperoxy-(5Z,8Z,10E,14Z)-eicosatetraenoyl-gamma-aminobutanoate. It catalyses the reaction N-(5Z,8Z,11Z,14Z)-eicosatetraenoyl-glycine + O2 = N-(12S)-hydroperoxy-(5Z,8Z,10E,14Z)-eicosatetraenoyl-glycine. The catalysed reaction is N-(5Z,8Z,11Z,14Z)-eicosatetraenoyl-L-alanine + O2 = N-(12S)-hydroperoxy-(5Z,8Z,10E,14Z)-eicosatetraenoyl-alanine. The enzyme catalyses N-(5Z,8Z,11Z,14Z)-eicosatetraenoyl-taurine + O2 = N-(15S)-hydroperoxy-(5Z,8Z,11Z,13E)-eicosatetraenoyl-taurine. It carries out the reaction N-(5Z,8Z,11Z,14Z)-eicosatetraenoyl-gamma-aminobutanoate + O2 = N-(15S)-hydroperoxy-(5Z,8Z,11Z,13E)-eicosatetraenoyl-gamma-aminobutanoate. It catalyses the reaction N-(5Z,8Z,11Z,14Z)-eicosatetraenoyl-glycine + O2 = N-(15S)-hydroperoxy-(5Z,8Z,11Z,13E)-eicosatetraenoyl-glycine. The catalysed reaction is N-(5Z,8Z,11Z,14Z)-eicosatetraenoyl-L-alanine + O2 = N-(15S)-hydroperoxy-(5Z,8Z,11Z,13E)-eicosatetraenoyl-alanine. The protein operates within lipid metabolism; hydroperoxy eicosatetraenoic acid biosynthesis. Activity is increased by binding phosphatidylinositol phosphates, especially phosphatidylinositol 3,4-bisphosphate and phosphatidylinositol 4,5-bisphosphate. Inactivated at 37 degrees Celsius by (13S)-hydroperoxy-(9Z,11E)-octadecadienoate. In terms of biological role, non-heme iron-containing dioxygenase that catalyzes the stereo-specific peroxidation of free and esterified polyunsaturated fatty acids generating a spectrum of bioactive lipid mediators. It inserts peroxyl groups at C12 or C15 of arachidonate ((5Z,8Z,11Z,14Z)-eicosatetraenoate) producing both 12-hydroperoxyeicosatetraenoate/12-HPETE and 15-hydroperoxyeicosatetraenoate/15-HPETE. It may then act on 12-HPETE to produce hepoxilins, which may show pro-inflammatory properties. Can also peroxidize linoleate ((9Z,12Z)-octadecadienoate) to 13-hydroperoxyoctadecadienoate/13-HPODE. May participate in the sequential oxidations of DHA ((4Z,7Z,10Z,13Z,16Z,19Z)-docosahexaenoate) to generate specialized pro-resolving mediators (SPMs)like resolvin D5 ((7S,17S)-diHPDHA) and (7S,14S)-diHPDHA, that actively down-regulate the immune response and have anti-aggregation properties with platelets. Can convert epoxy fatty acids to hydroperoxy-epoxides derivatives followed by an intramolecular nucleophilic substitution leading to the formation of monocyclic endoperoxides. Plays an important role during the maintenance of self-tolerance by peroxidizing membrane-bound phosphatidylethanolamine which can then signal the sorting process for clearance of apoptotic cells during inflammation and prevent an autoimmune response. In addition to its role in the immune and inflammatory responses, this enzyme may play a role in epithelial wound healing in the cornea through production of lipoxin A4 (LXA(4)) and docosahexaenoic acid-derived neuroprotectin D1 (NPD1; 10R,17S-HDHA), both lipid autacoids exhibit anti-inflammatory and neuroprotective properties. Furthermore, it may regulate actin polymerization which is crucial for several biological processes such as the phagocytosis of apoptotic cells. It is also implicated in the generation of endogenous ligands for peroxisome proliferator activated receptor (PPAR-gamma), hence modulating macrophage development and function. It may also exert a negative effect on skeletal development by regulating bone mass through this pathway. As well as participates in ER stress and downstream inflammation in adipocytes, pancreatic islets, and liver. Finally, it is also involved in the cellular response to IL13/interleukin-13. The chain is Polyunsaturated fatty acid lipoxygenase ALOX15 from Homo sapiens (Human).